We begin with the raw amino-acid sequence, 597 residues long: NADH-quinone oxidoreductase subunit C/D (597 aa).

Positions 1 to 187 (MIDENKKKNT…ESFFLDEQKE (187 aa)) are NADH dehydrogenase I subunit C. The NADH dehydrogenase I subunit D stretch occupies residues 211 to 597 (DFMFLNLGPN…IDFVMSDVDR (387 aa)).

This sequence in the N-terminal section; belongs to the complex I 30 kDa subunit family. In the C-terminal section; belongs to the complex I 49 kDa subunit family. NDH-1 is composed of 13 different subunits. Subunits NuoB, CD, E, F, and G constitute the peripheral sector of the complex.

The protein localises to the cell inner membrane. The enzyme catalyses a quinone + NADH + 5 H(+)(in) = a quinol + NAD(+) + 4 H(+)(out). Its function is as follows. NDH-1 shuttles electrons from NADH, via FMN and iron-sulfur (Fe-S) centers, to quinones in the respiratory chain. The immediate electron acceptor for the enzyme in this species is believed to be ubiquinone. Couples the redox reaction to proton translocation (for every two electrons transferred, four hydrogen ions are translocated across the cytoplasmic membrane), and thus conserves the redox energy in a proton gradient. The polypeptide is NADH-quinone oxidoreductase subunit C/D (Buchnera aphidicola subsp. Schizaphis graminum (strain Sg)).